The sequence spans 262 residues: MADIRELWDDVARSVAFLSRIPVPDRYFHGYDGGLGRAVRAFPLAAILITLPAAAIAFILGALHASSLFSAFLVVAVQAMVTGALHEDGLGDTADGFGGGRDRESALEIMKDSRIGTYGAVALILSFGLRVSALAAFLPLLTPTGGGIALLATAALSRAAMVWHWSRLPPARRGGVAASAGIPEPGATSVALGSGVLLALVLFFLAGIPTVAVWLSFAAFGLAVPGFTRIASRKLGGHTGDTIGATQQLTEVAVLGALALAI.

5 consecutive transmembrane segments (helical) span residues 41 to 61, 65 to 85, 115 to 132, 134 to 156, and 195 to 215; these read AFPL…FILG, ASSL…TGAL, IGTY…LRVS, LAAF…TAAL, and GVLL…AVWL.

It belongs to the CobS family. Mg(2+) serves as cofactor.

It localises to the cell inner membrane. It catalyses the reaction alpha-ribazole + adenosylcob(III)inamide-GDP = adenosylcob(III)alamin + GMP + H(+). It carries out the reaction alpha-ribazole 5'-phosphate + adenosylcob(III)inamide-GDP = adenosylcob(III)alamin 5'-phosphate + GMP + H(+). It functions in the pathway cofactor biosynthesis; adenosylcobalamin biosynthesis; adenosylcobalamin from cob(II)yrinate a,c-diamide: step 7/7. Joins adenosylcobinamide-GDP and alpha-ribazole to generate adenosylcobalamin (Ado-cobalamin). Also synthesizes adenosylcobalamin 5'-phosphate from adenosylcobinamide-GDP and alpha-ribazole 5'-phosphate. This is Adenosylcobinamide-GDP ribazoletransferase from Rhizobium meliloti (strain 1021) (Ensifer meliloti).